The chain runs to 75 residues: DNA-directed RNA polymerase subunit omega (75 aa).

Belongs to the RNA polymerase subunit omega family. The RNAP catalytic core consists of 2 alpha, 1 beta, 1 beta' and 1 omega subunit. When a sigma factor is associated with the core the holoenzyme is formed, which can initiate transcription.

The enzyme catalyses RNA(n) + a ribonucleoside 5'-triphosphate = RNA(n+1) + diphosphate. Promotes RNA polymerase assembly. Latches the N- and C-terminal regions of the beta' subunit thereby facilitating its interaction with the beta and alpha subunits. This Nitratidesulfovibrio vulgaris (strain DSM 19637 / Miyazaki F) (Desulfovibrio vulgaris) protein is DNA-directed RNA polymerase subunit omega.